Reading from the N-terminus, the 292-residue chain is GTP cyclohydrolase FolE2 (292 aa).

Belongs to the GTP cyclohydrolase IV family.

It carries out the reaction GTP + H2O = 7,8-dihydroneopterin 3'-triphosphate + formate + H(+). It functions in the pathway cofactor biosynthesis; 7,8-dihydroneopterin triphosphate biosynthesis; 7,8-dihydroneopterin triphosphate from GTP: step 1/1. In terms of biological role, converts GTP to 7,8-dihydroneopterin triphosphate. In Staphylococcus aureus (strain MRSA252), this protein is GTP cyclohydrolase FolE2.